We begin with the raw amino-acid sequence, 276 residues long: BES1/BZR1 homolog protein 1 (276 aa).

3 disordered regions span residues 1–30 (MTASGGGSTAATGRMPTWKERENNKKRERR), 76–125 (TTYR…PTRF), and 155–191 (SAPVTPPISSPRRSNPRLPRWQSSNFPVSAPSSPTRR). Positions 14 to 87 (RMPTWKEREN…YRKGSRPTET (74 aa)) are required for DNA-binding. Polar residues predominate over residues 84 to 103 (PTETTVPCSSIQLSPQSSAF). The segment covering 104 to 122 (QSPIPSYQASPSSSSYPSP) has biased composition (low complexity). A Phosphothreonine modification is found at T159. Low complexity predominate over residues 164–174 (SPRRSNPRLPR). The segment covering 175–189 (WQSSNFPVSAPSSPT) has biased composition (polar residues).

This sequence belongs to the BZR/LAT61 family. In terms of processing, phosphorylated. Phosphorylation increases protein degradation.

This is BES1/BZR1 homolog protein 1 (BEH1) from Arabidopsis thaliana (Mouse-ear cress).